The following is a 465-amino-acid chain: Pancreatic triacylglycerol lipase (465 aa).

The first 16 residues, methionine 1–glycine 16, serve as a signal peptide directing secretion. 2 disulfide bridges follow: cysteine 20–cysteine 26 and cysteine 108–cysteine 119. The active-site Nucleophile is serine 170. The active-site Charge relay system is the aspartate 194. Ca(2+) contacts are provided by glutamate 205, arginine 208, aspartate 210, and aspartate 213. Cysteines 255 and 279 form a disulfide. Histidine 281 acts as the Charge relay system in catalysis. 3 disulfide bridges follow: cysteine 303/cysteine 314, cysteine 317/cysteine 321, and cysteine 449/cysteine 465. The PLAT domain maps to tryptophan 355–cysteine 465.

It belongs to the AB hydrolase superfamily. Lipase family. Forms a 1:1 stoichiometric complex with (pro)colipase/CLPS.

Its subcellular location is the secreted. It catalyses the reaction a triacylglycerol + H2O = a diacylglycerol + a fatty acid + H(+). The catalysed reaction is 1,2,3-tributanoylglycerol + H2O = dibutanoylglycerol + butanoate + H(+). It carries out the reaction 1,2,3-tri-(9Z-octadecenoyl)-glycerol + H2O = di-(9Z)-octadecenoylglycerol + (9Z)-octadecenoate + H(+). The enzyme catalyses all-trans-retinyl hexadecanoate + H2O = all-trans-retinol + hexadecanoate + H(+). It catalyses the reaction 1,2-di-(9Z-octadecenoyl)-glycerol + H2O = (9Z-octadecenoyl)-glycerol + (9Z)-octadecenoate + H(+). With respect to regulation, inhibited by bile salts, is reactivated by (pro)colipase/CLPS. Functionally, plays an important role in fat metabolism. It preferentially splits the esters of long-chain fatty acids at positions 1 and 3, producing mainly 2-monoacylglycerol and free fatty acids, and shows considerably higher activity against insoluble emulsified substrates than against soluble ones. The chain is Pancreatic triacylglycerol lipase (PNLIP) from Oryctolagus cuniculus (Rabbit).